The primary structure comprises 116 residues: Large ribosomal subunit protein bL20 (116 aa).

Belongs to the bacterial ribosomal protein bL20 family.

Its function is as follows. Binds directly to 23S ribosomal RNA and is necessary for the in vitro assembly process of the 50S ribosomal subunit. It is not involved in the protein synthesizing functions of that subunit. The polypeptide is Large ribosomal subunit protein bL20 (rplT) (Helicobacter pylori (strain ATCC 700392 / 26695) (Campylobacter pylori)).